The following is a 69-amino-acid chain: Rubredoxin-1 (69 aa).

Residues 14–69 form the Rubredoxin-like domain; the sequence is QASWMCAECGYIYDPAEGNLETNIRPGMPFDKLPDDWSCPVCNHPKNQFTKFISQL. Fe cation contacts are provided by Cys-19, Cys-22, Cys-52, and Cys-55.

The protein belongs to the rubredoxin family. As to quaternary structure, monomer. Fe(3+) is required as a cofactor.

Its function is as follows. Serves as an electron acceptor for pyruvate ferredoxin oxidoreductase (PFOR). This chain is Rubredoxin-1 (rub1), found in Chlorobaculum tepidum (strain ATCC 49652 / DSM 12025 / NBRC 103806 / TLS) (Chlorobium tepidum).